The chain runs to 446 residues: Probable D-serine dehydratase (446 aa).

N6-(pyridoxal phosphate)lysine is present on K113.

This sequence belongs to the serine/threonine dehydratase family. DsdA subfamily. Pyridoxal 5'-phosphate is required as a cofactor.

It catalyses the reaction D-serine = pyruvate + NH4(+). In Burkholderia lata (strain ATCC 17760 / DSM 23089 / LMG 22485 / NCIMB 9086 / R18194 / 383), this protein is Probable D-serine dehydratase.